Reading from the N-terminus, the 597-residue chain is DNA import protein CedB (597 aa).

The chain crosses the membrane as a helical span at residues 10-30; the sequence is VVLLILGIISFNLVFIILAII. 286–293 is a binding site for ATP; that stretch reads GPTGSGKT.

The protein resides in the cell membrane. Its function is as follows. Part of the Ced system, which is involved in DNA import. This is DNA import protein CedB from Sulfolobus acidocaldarius (strain ATCC 33909 / DSM 639 / JCM 8929 / NBRC 15157 / NCIMB 11770).